The following is a 438-amino-acid chain: MASPLYSVVLGLAIVSAIVAPTSSTSRGTLLHHGQKRPQPGLRVDLEQVDSGKNLTKYELIKRAIKRGERRMRSINAMLQSSSGIETPVYAGDGEYLMNVAIGTPDSSFSAIMDTGSDLIWTQCEPCTQCFSQPTPIFNPQDSSSFSTLPCESQYCQDLPSETCNNNECQYTYGYGDGSTTQGYMATETFTFETSSVPNIAFGCGEDNQGFGQGNGAGLIGMGWGPLSLPSQLGVGQFSYCMTSYGSSSPSTLALGSAASGVPEGSPSTTLIHSSLNPTYYYITLQGITVGGDNLGIPSSTFQLQDDGTGGMIIDSGTTLTYLPQDAYNAVAQAFTDQINLPTVDESSSGLSTCFQQPSDGSTVQVPEISMQFDGGVLNLGEQNILISPAEGVICLAMGSSSQLGISIFGNIQQQETQVLYDLQNLAVSFVPTQCGAS.

Positions 1 to 24 (MASPLYSVVLGLAIVSAIVAPTSS) are cleaved as a signal peptide. A propeptide spans 25-79 (TSRGTLLHHGQKRPQPGLRVDLEQVDSGKNLTKYELIKRAIKRGERRMRSINAML) (activation peptide). The N-linked (GlcNAc...) asparagine glycan is linked to asparagine 54. Residues 96 to 431 (YLMNVAIGTP…DLQNLAVSFV (336 aa)) form the Peptidase A1 domain. The active site involves aspartate 114. 6 disulfides stabilise this stretch: cysteine 124–cysteine 127, cysteine 130–cysteine 204, cysteine 151–cysteine 169, cysteine 156–cysteine 164, cysteine 241–cysteine 435, and cysteine 354–cysteine 395. Residue aspartate 315 is part of the active site.

It belongs to the peptidase A1 family.

Its subcellular location is the secreted. It catalyses the reaction Similar to pepsin, but also cleaves on either side of Asp and at Lys-|-Arg.. With respect to regulation, inhibited by pepstatin and by diazoacetyl-D,L-norleucine methyl ester (DAN) in the presence of Cu(2+) ions. Extracellular proteinase found in the pitcher fluid of carnivorous plants. Digest prey for nitrogen uptake. The chain is Aspartic proteinase nepenthesin-2 (nep2) from Nepenthes gracilis (Slender pitcher plant).